A 287-amino-acid polypeptide reads, in one-letter code: Festuclavine synthase II (287 aa).

It belongs to the fgaFS/easG family.

It catalyses the reaction festuclavine + NAD(+) = 6,8-dimethyl-6,7-didehydroergoline + NADH + H(+). It functions in the pathway alkaloid biosynthesis; ergot alkaloid biosynthesis. Functionally, festuclavine synthase; part of the gene cluster that mediates the biosynthesis of isofumigaclavines, fungal ergot alkaloids. The tryptophan dimethylallyltransferase ifgA catalyzes the first step of ergot alkaloid biosynthesis by condensing dimethylallyl diphosphate (DMAP) and tryptophan to form 4-dimethylallyl-L-tryptophan. The second step is catalyzed by the methyltransferase ifgB that methylates 4-dimethylallyl-L-tryptophan in the presence of S-adenosyl-L-methionine, resulting in the formation of N-methyl-dimethylallyl-L-tryptophan. The catalase ifgD and the FAD-dependent oxidoreductase ifgC then transform N-methyl-dimethylallyl-L-tryptophan to chanoclavine-I which is further oxidized by ifgE in the presence of NAD(+), resulting in the formation of chanoclavine-I aldehyde. The chanoclavine-I aldehyde reductases ifgG and/or fgaOx3 reduce chanoclavine-I aldehyde to dihydrochanoclavine-I aldehyde that spontaneously dehydrates to form 6,8-dimethyl-6,7-didehydroergoline. The festuclavine dehydrogenases ifgF1 and/or ifgF2 then catalyze the reduction of 6,8-dimethyl-6,7-didehydroergoline to form festuclavine. Hydrolysis of festuclavine by a yet undetermined cytochrome P450 monooxygenase (called ifgH) then leads to the formation of isofumigaclavine B which is in turn acetylated by ifgI to isofumigaclavine A. Penicillium roqueforti has interestingly at least two sets of genes for the consumption of chanoclavine-I aldehyde on three different loci, the OYEs ifgG/fgaOx3 and the festuclavine synthase homologs ifgF1/ifgF2. The reason for the duplication of these genes is unclear, probably to ensure the conversion of chanoclavine-I aldehyde by differential gene expression under various environmental conditions. This is Festuclavine synthase II from Penicillium roqueforti (strain FM164).